The chain runs to 202 residues: Orotate phosphoribosyltransferase (202 aa).

Residues Lys-93 and 113–121 contribute to the 5-phospho-alpha-D-ribose 1-diphosphate site; that span reads EDIITTGGS. Residues Thr-117 and Arg-145 each coordinate orotate.

The protein belongs to the purine/pyrimidine phosphoribosyltransferase family. PyrE subfamily. As to quaternary structure, homodimer. Mg(2+) serves as cofactor.

The catalysed reaction is orotidine 5'-phosphate + diphosphate = orotate + 5-phospho-alpha-D-ribose 1-diphosphate. The protein operates within pyrimidine metabolism; UMP biosynthesis via de novo pathway; UMP from orotate: step 1/2. In terms of biological role, catalyzes the transfer of a ribosyl phosphate group from 5-phosphoribose 1-diphosphate to orotate, leading to the formation of orotidine monophosphate (OMP). In Campylobacter concisus (strain 13826), this protein is Orotate phosphoribosyltransferase.